Reading from the N-terminus, the 201-residue chain is Holliday junction resolvase RecU (201 aa).

Residues T87, D89, D102, and Q121 each coordinate Mg(2+).

It belongs to the RecU family. The cofactor is Mg(2+).

It is found in the cytoplasm. It carries out the reaction Endonucleolytic cleavage at a junction such as a reciprocal single-stranded crossover between two homologous DNA duplexes (Holliday junction).. Functionally, endonuclease that resolves Holliday junction intermediates in genetic recombination. Cleaves mobile four-strand junctions by introducing symmetrical nicks in paired strands. Promotes annealing of linear ssDNA with homologous dsDNA. Required for DNA repair, homologous recombination and chromosome segregation. In Levilactobacillus brevis (strain ATCC 367 / BCRC 12310 / CIP 105137 / JCM 1170 / LMG 11437 / NCIMB 947 / NCTC 947) (Lactobacillus brevis), this protein is Holliday junction resolvase RecU.